Here is a 156-residue protein sequence, read N- to C-terminus: MSGGLLKALRSDSYVELSEYRDQHFRGDNEEQEKLLKKSCTLYVGNLSFYTTEEQIYELFSKSGDIKKIIMGLDKMKKTACGFCFVEYYSRADAENAMRYINGTRLDDRIIRTDWDAGFKEGRQYGRGRSGGQVRDEYREDYDAGRGGYGKLAQKQ.

Ser-2 carries the N-acetylserine modification. Ser-13 and Ser-18 each carry phosphoserine. Residues Tyr-20, Tyr-43, 112-116, 123-127, and 133-134 each bind mRNA; these read RTDWD, RQYGR, and QV. The RRM domain maps to 40–118; that stretch reads CTLYVGNLSF…RIIRTDWDAG (79 aa). The tract at residues 124 to 156 is disordered; the sequence is QYGRGRSGGQVRDEYREDYDAGRGGYGKLAQKQ. The segment covering 134 to 144 has biased composition (basic and acidic residues); it reads VRDEYREDYDA. Arg-146 is subject to Omega-N-methylarginine.

This sequence belongs to the RRM NCBP2 family. In terms of assembly, component of the nuclear cap-binding complex (CBC), a heterodimer composed of NCBP1/CBP80 and NCBP2/CBP20 that interacts with m7GpppG-capped RNA. Found in a U snRNA export complex with PHAX/RNUXA, NCBP1/CBP80, NCBP2/CBP20, RAN, XPO1 and m7G-capped RNA. Interacts with PHAX/RNUXA, EIF4G1, HNRNPF, HNRNPH1 and ALYREF/THOC4/ALY. Interacts with SRRT/ARS2 and KPNA3.

It localises to the nucleus. The protein resides in the cytoplasm. In terms of biological role, component of the cap-binding complex (CBC), which binds co-transcriptionally to the 5' cap of pre-mRNAs and is involved in various processes such as pre-mRNA splicing, translation regulation, nonsense-mediated mRNA decay, RNA-mediated gene silencing (RNAi) by microRNAs (miRNAs) and mRNA export. The CBC complex is involved in mRNA export from the nucleus via its interaction with ALYREF/THOC4/ALY, leading to the recruitment of the mRNA export machinery to the 5' end of mRNA and to mRNA export in a 5' to 3' direction through the nuclear pore. The CBC complex is also involved in mediating U snRNA and intronless mRNAs export from the nucleus. The CBC complex is essential for a pioneer round of mRNA translation, before steady state translation when the CBC complex is replaced by cytoplasmic cap-binding protein eIF4E. The pioneer round of mRNA translation mediated by the CBC complex plays a central role in nonsense-mediated mRNA decay (NMD), NMD only taking place in mRNAs bound to the CBC complex, but not on eIF4E-bound mRNAs. The CBC complex enhances NMD in mRNAs containing at least one exon-junction complex (EJC) via its interaction with UPF1, promoting the interaction between UPF1 and UPF2. The CBC complex is also involved in 'failsafe' NMD, which is independent of the EJC complex, while it does not participate in Staufen-mediated mRNA decay (SMD). During cell proliferation, the CBC complex is also involved in microRNAs (miRNAs) biogenesis via its interaction with SRRT/ARS2, thereby being required for miRNA-mediated RNA interference. The CBC complex also acts as a negative regulator of PARN, thereby acting as an inhibitor of mRNA deadenylation. In the CBC complex, NCBP2/CBP20 recognizes and binds capped RNAs (m7GpppG-capped RNA) but requires NCBP1/CBP80 to stabilize the movement of its N-terminal loop and lock the CBC into a high affinity cap-binding state with the cap structure. The conventional cap-binding complex with NCBP2 binds both small nuclear RNA (snRNA) and messenger (mRNA) and is involved in their export from the nucleus. The protein is Nuclear cap-binding protein subunit 2 (Ncbp2) of Mus musculus (Mouse).